The chain runs to 213 residues: Kynurenine formamidase (213 aa).

Trp-18 is a binding site for substrate. Residues His-48, His-52, and Asp-54 each coordinate Zn(2+). The Proton donor/acceptor role is filled by His-58. Zn(2+)-binding residues include His-160 and Glu-172.

The protein belongs to the Cyclase 1 superfamily. KynB family. Homodimer. The cofactor is Zn(2+).

The catalysed reaction is N-formyl-L-kynurenine + H2O = L-kynurenine + formate + H(+). Its pathway is amino-acid degradation; L-tryptophan degradation via kynurenine pathway; L-kynurenine from L-tryptophan: step 2/2. Functionally, catalyzes the hydrolysis of N-formyl-L-kynurenine to L-kynurenine, the second step in the kynurenine pathway of tryptophan degradation. This Burkholderia thailandensis (strain ATCC 700388 / DSM 13276 / CCUG 48851 / CIP 106301 / E264) protein is Kynurenine formamidase.